The primary structure comprises 83 residues: ATP synthase subunit c (83 aa).

2 consecutive transmembrane segments (helical) span residues 10–30 and 52–72; these read IAVALLIGMGALGTAIGFGLL and MFIVAGLLDAVTMIGVGIALY.

The protein belongs to the ATPase C chain family. F-type ATPases have 2 components, F(1) - the catalytic core - and F(0) - the membrane proton channel. F(1) has five subunits: alpha(3), beta(3), gamma(1), delta(1), epsilon(1). F(0) has three main subunits: a(1), b(2) and c(10-14). The alpha and beta chains form an alternating ring which encloses part of the gamma chain. F(1) is attached to F(0) by a central stalk formed by the gamma and epsilon chains, while a peripheral stalk is formed by the delta and b chains.

It is found in the cell inner membrane. Functionally, f(1)F(0) ATP synthase produces ATP from ADP in the presence of a proton or sodium gradient. F-type ATPases consist of two structural domains, F(1) containing the extramembraneous catalytic core and F(0) containing the membrane proton channel, linked together by a central stalk and a peripheral stalk. During catalysis, ATP synthesis in the catalytic domain of F(1) is coupled via a rotary mechanism of the central stalk subunits to proton translocation. Key component of the F(0) channel; it plays a direct role in translocation across the membrane. A homomeric c-ring of between 10-14 subunits forms the central stalk rotor element with the F(1) delta and epsilon subunits. The polypeptide is ATP synthase subunit c (Shewanella denitrificans (strain OS217 / ATCC BAA-1090 / DSM 15013)).